Consider the following 492-residue polypeptide: Prostaglandin E2 receptor EP4 subtype (492 aa).

The Extracellular portion of the chain corresponds to 1–19; sequence MSIPGTNASSSQASNPLNS. An N-linked (GlcNAc...) asparagine glycan is attached at Asn-7. A helical transmembrane segment spans residues 20–43; the sequence is PVTIPAVMFIFGVVGNLVAIVVLC. Residues 44-55 are Cytoplasmic-facing; the sequence is KSRKEQKETTFY. Residues 56-79 traverse the membrane as a helical segment; sequence TLVCGLAVTDLLGTLLVSPVTIAT. The Extracellular portion of the chain corresponds to 80 to 96; the sequence is YLKGQWPGGHALCEYST. A disulfide bond links Cys-92 and Cys-170. The chain crosses the membrane as a helical span at residues 97-115; the sequence is FILLFFGLSGLSIICAMSI. The Cytoplasmic segment spans residues 116–135; that stretch reads ERYLAINHAYFYSHYVDKRL. Residues 136–160 form a helical membrane-spanning segment; that stretch reads AGLTLFAVYASNVLFCALPSMGLGS. Residues 161–184 lie on the Extracellular side of the membrane; the sequence is SRLQYPATWCFIDWTTNVTAHAAF. The chain crosses the membrane as a helical span at residues 185 to 211; that stretch reads SYMYAGFSSFLILATVLCNVLVCGALL. The Cytoplasmic segment spans residues 212-273; sequence RMHRQFMRRT…RSFRRIAGAE (62 aa). Residues 274-301 traverse the membrane as a helical segment; that stretch reads IQMVILLIATSLVVLICSIPLVVRVFVN. Topologically, residues 302–318 are extracellular; the sequence is QLYRPQLEPVIGKNPDL. A helical membrane pass occupies residues 319–338; that stretch reads QAIRIASVSPILDPWIYILL. The Cytoplasmic segment spans residues 339 to 492; that stretch reads RKTVLSKAIE…ETLNLSEKCI (154 aa). The segment covering 361–374 has biased composition (basic and acidic residues); that stretch reads RRERSGPHCSDSRR. Residues 361 to 383 are disordered; it reads RRERSGPHCSDSRRTSSAVSGHS. A phosphoserine mark is found at Ser-380, Ser-383, Ser-385, and Ser-388.

Belongs to the G-protein coupled receptor 1 family. Interacts with FEM1A. Post-translationally, phosphorylation mediates agonist-mediated desensitization by promoting cytoplasmic retention.

The protein resides in the cell membrane. Its function is as follows. Receptor for prostaglandin E2 (PGE2). The activity of this receptor is mediated by G(s) proteins that stimulate adenylate cyclase. Has a relaxing effect on smooth muscle. May play an important role in regulating renal hemodynamics, intestinal epithelial transport, adrenal aldosterone secretion, and uterine function. The chain is Prostaglandin E2 receptor EP4 subtype (PTGER4) from Bos taurus (Bovine).